A 681-amino-acid chain; its full sequence is Potassium-transporting ATPase ATP-binding subunit (681 aa).

The next 4 membrane-spanning stretches (helical) occupy residues 30-50 (LLVY…FFGI), 59-79 (LAIA…EAIA), 216-236 (ILLV…LPFT), and 255-275 (IALL…SIGI). Catalysis depends on Asp-306, which acts as the 4-aspartylphosphate intermediate. ATP contacts are provided by residues Asp-343, Glu-347, 376-383 (FTATTRMS), and Lys-394. Mg(2+)-binding residues include Asp-517 and Asp-521. The next 3 membrane-spanning stretches (helical) occupy residues 587–607 (FAII…LNLM), 615–635 (AILS…PLSL), and 661–681 (LIAP…LGIV).

It belongs to the cation transport ATPase (P-type) (TC 3.A.3) family. Type IA subfamily. The system is composed of three essential subunits: KdpA, KdpB and KdpC.

The protein resides in the cell membrane. It catalyses the reaction K(+)(out) + ATP + H2O = K(+)(in) + ADP + phosphate + H(+). Functionally, part of the high-affinity ATP-driven potassium transport (or Kdp) system, which catalyzes the hydrolysis of ATP coupled with the electrogenic transport of potassium into the cytoplasm. This subunit is responsible for energy coupling to the transport system and for the release of the potassium ions to the cytoplasm. The polypeptide is Potassium-transporting ATPase ATP-binding subunit (Listeria monocytogenes serotype 4a (strain HCC23)).